The sequence spans 311 residues: CARD domain-containing protein E10 (311 aa).

The CARD domain occupies 21–110 (IWDVERLCLE…EHLVDLLERA (90 aa)). Disordered stretches follow at residues 125–181 (ESGA…GGVY), 203–230 (GAGRGGSLLSGGHGGHPPHGGPGGGGRD), and 243–311 (IPEP…FFCC). Residues 140–152 (EDNSGYTALLPTN) are compositionally biased toward polar residues. Over residues 252–272 (SGGGGRGGGVRYDAGGDGRLG) the composition is skewed to gly residues.

It localises to the host cell membrane. Functionally, activates host NF-kappa-B and JNK pathways. Induces hyperphosphorylation and redistribution of host bcl-10 from the cytoplasm to the plasma membrane. The inhibitory effect of cellular bcl-10 on NF-kappa-B pathway is then overcome allowing NF-kappa-B activation. The chain is CARD domain-containing protein E10 (E10) from Equus caballus (Horse).